The chain runs to 60 residues: Small, acid-soluble spore protein H 2 (60 aa).

The disordered stretch occupies residues 38 to 60 (TIHPLDNPSQKQSVPVASLEEHS).

The protein belongs to the SspH family.

Its subcellular location is the spore core. This is Small, acid-soluble spore protein H 2 from Geobacillus thermodenitrificans (strain NG80-2).